We begin with the raw amino-acid sequence, 244 residues long: MDCNRNCYCKCVICNSISTDSHTSPRFNMVSEMAETNFKLKYWGNQAEDYILPSTYLGREYLVFGKLLISLSKWRAKGLLDFDVYIRPTGVGTLTNVINEQYYSGLQDKYDLTLYVKAKTEYYPLIWIDITGSSWTEEQSKERYGESVYAILSTKVEVAKQNEVMGRVWFIHYSDAEDKLKCISALQILNLEKQGKIKKDKFERDAVSYYYLIPLQYWKNLTDLRVSLKGFYQSFKEYLARGGK.

This is an uncharacterized protein from Sulfolobus spindle-shape virus 1 (SSV1).